The sequence spans 357 residues: Dynein axonemal assembly factor 10 (357 aa).

WD repeat units lie at residues 80-127 (EFTN…IPIW), 132-170 (AHQGSISAIDAYADNLVVCGGKDGTIKVYDTRIKPNSAN), 184-223 (EQTNKSNCWSICTNDNNIIAGFENGDLNIYNLKTNSIQST), and 277-321 (EPNQ…IDKV).

In terms of assembly, interacts with PIH1D1; the interaction associates DNAAF10 with the R2TP complex. Interacts with several dynein axonemal assembly factors.

It is found in the dynein axonemal particle. Its function is as follows. Key assembly factor specifically required for the stability of axonemal dynein heavy chains in cytoplasm. This is Dynein axonemal assembly factor 10 (dnaaf10) from Dictyostelium discoideum (Social amoeba).